A 161-amino-acid chain; its full sequence is Epoxidase gkaX (161 aa).

The first 18 residues, M1–S18, serve as a signal peptide directing secretion. A glycan (N-linked (GlcNAc...) asparagine) is linked at N45. 3 consecutive transmembrane segments (helical) span residues W59–V79, I92–L112, and W139–S159.

It belongs to the epoxidase xenD family.

It localises to the membrane. It participates in mycotoxin biosynthesis. In terms of biological role, epoxidase; part of the gene cluster that mediates the biosynthesis of GKK1032, fungal natural products containing a macrocyclic para-cyclophane connected to a decahydrofluorene ring system that show potent antitumor activities. Within the pathway, gkaX functions synergistically with gkaB and gkaZ to form the cyclophane. The pathway begins with the PKS-NRPS gkaA which, with the help of the trans-enoyl reductase gkaC, synthesizes the polyketide-tyrosyl acyl thioester product which can be reductively off-loaded by the terminal reductase (R) domain in gkaA. The alpha/beta hydrolase gkaG is then required to catalyze the subsequent Knoevenagel condensation that affords the 3-pyrrolin-2-one ring, whereas the three proteins gkaB, gkaX and gkaZ then function synergistically to form the cyclophane. This Penicillium citrinum protein is Epoxidase gkaX.